Consider the following 517-residue polypeptide: GMP synthase [glutamine-hydrolyzing] (517 aa).

The Glutamine amidotransferase type-1 domain maps to 11–202; it reads KIIVLDYGSQ…AFDICKAEAN (192 aa). Cys88 functions as the Nucleophile in the catalytic mechanism. Residues His176 and Glu178 contribute to the active site. The GMPS ATP-PPase domain occupies 203–392; that stretch reads WSMDDFITKQ…LGMPHALVWR (190 aa). ATP is bound at residue 230-236; the sequence is SGGVDSS.

In terms of assembly, homodimer.

It catalyses the reaction XMP + L-glutamine + ATP + H2O = GMP + L-glutamate + AMP + diphosphate + 2 H(+). Its pathway is purine metabolism; GMP biosynthesis; GMP from XMP (L-Gln route): step 1/1. Functionally, catalyzes the synthesis of GMP from XMP. This is GMP synthase [glutamine-hydrolyzing] from Lacticaseibacillus casei (strain BL23) (Lactobacillus casei).